Consider the following 492-residue polypeptide: Cytochrome P450 monooxygenase ATEG_03631 (492 aa).

A helical transmembrane segment spans residues 10-30 (FATLNPMVVVAIPVFLFVISL). An N-linked (GlcNAc...) asparagine glycan is attached at Asn309. Cys457 is a heme binding site.

This sequence belongs to the cytochrome P450 family. Requires heme as cofactor.

It is found in the membrane. Its pathway is secondary metabolite biosynthesis. Cytochrome P450 monooxygenase; part of the cluster A that mediates the biosynthesis of azasperpyranones, members of the azaphilone family that exhibit anti-cancer activities. Azasperpyranones are synthesized by 2 clusters, A and B. Cluster A is responsible for the production of the polyhydric phenol moiety while the azaphilonoid scaffold is produced by the cluster B. The non-reducing polyketide synthase ATEG_03629 produces 5-methyl orsellinic acid, which is then reduced to 5-methyl orsellinic aldehyde by the NRPS-like protein ATEG_03630. 5-methyl orsellinic aldehyde is then first hydroxylated by the FAD-dependent monooxygenase ATEG_03635 and subsequently hydroxylated by the cytochrome P450 monooxygenase ATEG_03631 to produce the unstable polyhydric phenol precursor of azasperpyranones. On the other hand, the polyketide synthase ATEG_07659 is responsible for producing the 3,5-dimethyloctadienone moiety from acetyl-CoA, three malonyl-CoA, and two S-adenosyl methionines (SAM). The 3,5-dimethyloctadienone moiety is then loaded onto the SAT domain of ATEG_07661 and extended with four malonyl-CoA and one SAM, which leads to the formation of 2,4-dihydroxy-6-(5,7-dimethyl-2-oxo-trans-3-trans-5-nonadienyl)-3-methylbenzaldehyde (compound 8) after reductive release and aldol condensation. The FAD-dependent monooxygenase ATEG_07662 is the next enzyme in the biosynthesis sequence and hydroxylates the side chain at the benzylic position of compound 8. In Aspergillus nidulans, afoF, the ortholog of the FAD-dependent oxygenase ATEG_07660, is the key enzyme for the biosynthesis of asperfuranone by catalyzing the hydroxylation at C-8 of to prevent the formation of a six-membered ring hemiacetal intermediate and thus facilitating the formation of a five-membered ring to produce asperfuranone. In Aspergillus terreus, ATEG_07660 is probably not functional, which leads to the formation of the six-membered ring hemiacetal intermediate presperpyranone instead of asperfuranone. Finally, ATEG_03636 is involved in the condensation of the polyhydric phenol moiety produced by cluster A and the perasperpyranone precursor produced by cluster B, to yield azasperpyranone A. Further modifications of azasperpyranone A result in the production of derivatives, including azasperpyranone B to F. The protein is Cytochrome P450 monooxygenase ATEG_03631 of Aspergillus terreus (strain NIH 2624 / FGSC A1156).